A 145-amino-acid chain; its full sequence is Large ribosomal subunit protein uL15 (145 aa).

The interval 1–57 (MKLNDLSPAPGSRREKHRPGRGIGSGLGKTGGRGHKGQTSRSGGTIAPGFEGGQQPL) is disordered. Over residues 21 to 31 (RGIGSGLGKTG) the composition is skewed to gly residues.

This sequence belongs to the universal ribosomal protein uL15 family. As to quaternary structure, part of the 50S ribosomal subunit.

Its function is as follows. Binds to the 23S rRNA. The protein is Large ribosomal subunit protein uL15 of Pseudomonas fluorescens (strain Pf0-1).